The primary structure comprises 67 residues: DNA-directed RNA polymerase subunit omega (67 aa).

It belongs to the RNA polymerase subunit omega family. The RNAP catalytic core consists of 2 alpha, 1 beta, 1 beta' and 1 omega subunit. When a sigma factor is associated with the core the holoenzyme is formed, which can initiate transcription.

The catalysed reaction is RNA(n) + a ribonucleoside 5'-triphosphate = RNA(n+1) + diphosphate. In terms of biological role, promotes RNA polymerase assembly. Latches the N- and C-terminal regions of the beta' subunit thereby facilitating its interaction with the beta and alpha subunits. This is DNA-directed RNA polymerase subunit omega from Leptothrix cholodnii (strain ATCC 51168 / LMG 8142 / SP-6) (Leptothrix discophora (strain SP-6)).